A 791-amino-acid chain; its full sequence is Phenylalanine--tRNA ligase beta subunit (791 aa).

The region spanning 39–147 (GDALGQVVVA…DDAPVGQALA (109 aa)) is the tRNA-binding domain. The 76-residue stretch at 400–475 (PQPASILLRR…RIHGYDRVPT (76 aa)) folds into the B5 domain. Mg(2+)-binding residues include D453, D459, E462, and E463. The FDX-ACB domain occupies 697–790 (SRYPSMRRDL…IEREHRARIR (94 aa)).

It belongs to the phenylalanyl-tRNA synthetase beta subunit family. Type 1 subfamily. In terms of assembly, tetramer of two alpha and two beta subunits. Requires Mg(2+) as cofactor.

Its subcellular location is the cytoplasm. The enzyme catalyses tRNA(Phe) + L-phenylalanine + ATP = L-phenylalanyl-tRNA(Phe) + AMP + diphosphate + H(+). In Xanthomonas campestris pv. campestris (strain 8004), this protein is Phenylalanine--tRNA ligase beta subunit.